The primary structure comprises 353 residues: UPF0283 membrane protein YpsIP31758_1791 (353 aa).

A run of 3 helical transmembrane segments spans residues 71–91 (MVTA…VQWV), 101–121 (IALG…GSVV), and 214–234 (ESAL…FIAW).

The protein belongs to the UPF0283 family.

The protein resides in the cell inner membrane. This Yersinia pseudotuberculosis serotype O:1b (strain IP 31758) protein is UPF0283 membrane protein YpsIP31758_1791.